Reading from the N-terminus, the 270-residue chain is Feruloyl esterase C (270 aa).

A signal peptide spans 1-21 (MLRAVLLPTLLAFGAFTPVHG).

The protein belongs to the faeC family.

It is found in the secreted. It catalyses the reaction feruloyl-polysaccharide + H2O = ferulate + polysaccharide.. In terms of biological role, involved in degradation of plant cell walls. Hydrolyzes the feruloyl-arabinose ester bond in arabinoxylans, and the feruloyl-galactose ester bond in pectin. Active against paranitrophenyl-acetate, methyl ferulate and wheat arabinoxylan. The chain is Feruloyl esterase C (faeC) from Emericella nidulans (strain FGSC A4 / ATCC 38163 / CBS 112.46 / NRRL 194 / M139) (Aspergillus nidulans).